The following is a 907-amino-acid chain: Protein translocase subunit SecA (907 aa).

ATP-binding positions include Gln-87, 105–109, and Asp-506; that span reads GEGKT. A compositionally biased stretch (basic and acidic residues) spans 834–850; that stretch reads LEQQREEEAREQAEKMK. A disordered region spans residues 834–907; it reads LEQQREEEAR…KYKQCHGKIE (74 aa). Low complexity predominate over residues 864–875; it reads QPQPSQQQGEQP. The Zn(2+) site is built by Cys-891, Cys-893, Cys-902, and His-903. Positions 897–907 are enriched in basic residues; that stretch reads KKYKQCHGKIE.

This sequence belongs to the SecA family. As to quaternary structure, monomer and homodimer. Part of the essential Sec protein translocation apparatus which comprises SecA, SecYEG and auxiliary proteins SecDF-YajC and YidC. It depends on Zn(2+) as a cofactor.

Its subcellular location is the cell inner membrane. The protein localises to the cytoplasm. It catalyses the reaction ATP + H2O + cellular proteinSide 1 = ADP + phosphate + cellular proteinSide 2.. In terms of biological role, part of the Sec protein translocase complex. Interacts with the SecYEG preprotein conducting channel. Has a central role in coupling the hydrolysis of ATP to the transfer of proteins into and across the cell membrane, serving both as a receptor for the preprotein-SecB complex and as an ATP-driven molecular motor driving the stepwise translocation of polypeptide chains across the membrane. The protein is Protein translocase subunit SecA of Alcanivorax borkumensis (strain ATCC 700651 / DSM 11573 / NCIMB 13689 / SK2).